The following is a 475-amino-acid chain: Protein transport protein Sec61 subunit alpha (475 aa).

The next 10 membrane-spanning stretches (helical) occupy residues 33–53 (LWTA…LFGI), 76–96 (LMEL…LLAG), 118–138 (LFGM…GMYG), 145–165 (AGIC…VLLL), 173–193 (YGLG…TIVW), 241–261 (NLMN…FQGF), 289–309 (IPII…QMLA), 354–374 (FLDP…CAFF), 420–440 (AAFG…IGAI), and 441–461 (GSGT…EIFV).

Belongs to the SecY/SEC61-alpha family. The SEC61 channel-forming translocon complex consists of channel-forming core components SEC61A1, SEC61B and SEC61G and different auxiliary components such as SEC62 and SEC63. The SEC61 channel associates with the multi-pass translocon (MPT) complex. Expressed predominantly in epidermal cells of the embryo.

It localises to the endoplasmic reticulum membrane. Functionally, component of SEC61 channel-forming translocon complex that mediates transport of signal peptide-containing precursor polypeptides across the endoplasmic reticulum (ER). Forms a ribosome receptor and a gated pore in the ER membrane, both functions required for cotranslational translocation of nascent polypeptides. May cooperate with auxiliary protein SEC62, SEC63 and HSPA5/BiP to enable post-translational transport of small presecretory proteins. The SEC61 channel is also involved in ER membrane insertion of transmembrane proteins: it mediates membrane insertion of the first few transmembrane segments of proteins, while insertion of subsequent transmembrane regions of multi-pass membrane proteins is mediated by the multi-pass translocon (MPT) complex. This is Protein transport protein Sec61 subunit alpha from Halocynthia roretzi (Sea squirt).